The sequence spans 201 residues: Peptidyl-prolyl cis-trans isomerase FKBP11 (201 aa).

The N-terminal stretch at 1-27 (MTLRPSLLPLHLLLLLLLSAAVCRAEA) is a signal peptide. The PPIase FKBP-type domain occupies 57-144 (GDTLHIHYTG…QYDVELIALI (88 aa)). A helical transmembrane segment spans residues 156–176 (ILPLVGMAMVPALLGLIGYHL).

Belongs to the FKBP-type PPIase family. Interacts with IFITM5.

The protein resides in the membrane. It carries out the reaction [protein]-peptidylproline (omega=180) = [protein]-peptidylproline (omega=0). Its function is as follows. PPIases accelerate the folding of proteins during protein synthesis. The sequence is that of Peptidyl-prolyl cis-trans isomerase FKBP11 (FKBP11) from Homo sapiens (Human).